The following is a 201-amino-acid chain: Holliday junction branch migration complex subunit RuvA (201 aa).

Positions 1-63 (MYAYIKGKLS…EDAQLLYGFM (63 aa)) are domain I. The domain II stretch occupies residues 64–142 (SEEEKGMFLS…ITEENPETLL (79 aa)). The segment at 143–153 (NFEGSESNQTS) is flexible linker. Residues 153–201 (SPILDEALLALEALGYSKRELNKVEKKLQAESYTSVDEAVKAGLKILVS) are domain III.

It belongs to the RuvA family. In terms of assembly, homotetramer. Forms an RuvA(8)-RuvB(12)-Holliday junction (HJ) complex. HJ DNA is sandwiched between 2 RuvA tetramers; dsDNA enters through RuvA and exits via RuvB. An RuvB hexamer assembles on each DNA strand where it exits the tetramer. Each RuvB hexamer is contacted by two RuvA subunits (via domain III) on 2 adjacent RuvB subunits; this complex drives branch migration. In the full resolvosome a probable DNA-RuvA(4)-RuvB(12)-RuvC(2) complex forms which resolves the HJ.

It is found in the cytoplasm. In terms of biological role, the RuvA-RuvB-RuvC complex processes Holliday junction (HJ) DNA during genetic recombination and DNA repair, while the RuvA-RuvB complex plays an important role in the rescue of blocked DNA replication forks via replication fork reversal (RFR). RuvA specifically binds to HJ cruciform DNA, conferring on it an open structure. The RuvB hexamer acts as an ATP-dependent pump, pulling dsDNA into and through the RuvAB complex. HJ branch migration allows RuvC to scan DNA until it finds its consensus sequence, where it cleaves and resolves the cruciform DNA. This is Holliday junction branch migration complex subunit RuvA from Staphylococcus carnosus (strain TM300).